The following is a 393-amino-acid chain: G protein-activated inward rectifier potassium channel 3 (393 aa).

The disordered stretch occupies residues 1–23 (MAQENAAFSPGSEEPPRRRGRQR). Topologically, residues 1-57 (MAQENAAFSPGSEEPPRRRGRQRYVEKDGRCNVQQGNVRETYRYLTDLFTTLVDLQW) are cytoplasmic. A helical membrane pass occupies residues 58–82 (RLSLLFFVLAYALTWLFFGAIWWLI). At 83-106 (AYGRGDLEHLEDTAWTPCVNNLNG) the chain is on the extracellular side. An intramembrane region (helical; Pore-forming) is located at residues 107–118 (FVAAFLFSIETE). Positions 119-125 (TTIGYGH) form an intramembrane region, pore-forming. Positions 120-125 (TIGYGH) match the Selectivity filter motif. The Extracellular portion of the chain corresponds to 126–134 (RVITDQCPE). Residues 135-156 (GIVLLLLQAILGSMVNAFMVGC) traverse the membrane as a helical segment. The Cytoplasmic segment spans residues 157–393 (MFVKISQPNK…LPPPESESKV (237 aa)). Positions 360–393 (KVEEEGAGEGAGAGDGADKEHNGCLPPPESESKV) are disordered. Residues 384–393 (LPPPESESKV) are compositionally biased toward pro residues. The PDZ-binding signature appears at 390-393 (ESKV).

This sequence belongs to the inward rectifier-type potassium channel (TC 1.A.2.1) family. KCNJ9 subfamily. In terms of assembly, associates with KCNJ3/GIRK1 to form a G-protein-activated heteromultimer pore-forming unit. Interacts (via PDZ-binding motif) with SNX27 (via PDZ domain); the interaction is required when endocytosed to prevent degradation in lysosomes and promote recycling to the plasma membrane. Expressed mainly in the brain, some expression in the skeletal muscle.

Its subcellular location is the membrane. The catalysed reaction is K(+)(in) = K(+)(out). Its function is as follows. Inward rectifier potassium channels are characterized by a greater tendency to allow potassium to flow into the cell rather than out of it. Their voltage dependence is regulated by the concentration of extracellular potassium; as external potassium is raised, the voltage range of the channel opening shifts to more positive voltages. The inward rectification is mainly due to the blockage of outward current by internal magnesium. This receptor is controlled by G proteins. Unable to produce channel activity when expressed alone. Forms a functional channel in association with KCNJ3/GIRK1. The sequence is that of G protein-activated inward rectifier potassium channel 3 (Kcnj9) from Mus musculus (Mouse).